Here is a 435-residue protein sequence, read N- to C-terminus: 3-phosphoshikimate 1-carboxyvinyltransferase (435 aa).

The 3-phosphoshikimate site is built by K22, S23, and R27. Residue K22 participates in phosphoenolpyruvate binding. Phosphoenolpyruvate is bound by residues G94 and R122. S166, Q168, D314, and K341 together coordinate 3-phosphoshikimate. Q168 is a binding site for phosphoenolpyruvate. D314 serves as the catalytic Proton acceptor. Residues R345 and R388 each coordinate phosphoenolpyruvate.

This sequence belongs to the EPSP synthase family. Monomer.

It is found in the cytoplasm. The enzyme catalyses 3-phosphoshikimate + phosphoenolpyruvate = 5-O-(1-carboxyvinyl)-3-phosphoshikimate + phosphate. Its pathway is metabolic intermediate biosynthesis; chorismate biosynthesis; chorismate from D-erythrose 4-phosphate and phosphoenolpyruvate: step 6/7. Functionally, catalyzes the transfer of the enolpyruvyl moiety of phosphoenolpyruvate (PEP) to the 5-hydroxyl of shikimate-3-phosphate (S3P) to produce enolpyruvyl shikimate-3-phosphate and inorganic phosphate. In Vesicomyosocius okutanii subsp. Calyptogena okutanii (strain HA), this protein is 3-phosphoshikimate 1-carboxyvinyltransferase.